Consider the following 585-residue polypeptide: Involucrin (585 aa).

The span at 1–15 shows a compositional bias: polar residues; that stretch reads MSQQHTLPVTLSPAL. The tract at residues 1–132 is disordered; that stretch reads MSQQHTLPVT…LEEEKKLLDQ (132 aa). Residue Q79 is the site of Omega-hydroxyceramide glutamate ester attachment. Over residues 92 to 115 the composition is skewed to basic and acidic residues; it reads WEQHEEYQKAENPEQQLKQEKTQR. Omega-hydroxyceramide glutamate ester attachment occurs at residues Q118 and Q133. The interval 149–540 is disordered; sequence KEQLLELPEQ…KDLEQQKGQL (392 aa). A run of 23 repeats spans residues 153–162, 163–172, 173–182, 183–192, 193–202, 203–212, 213–222, 223–232, 233–242, 243–252, 253–262, 263–272, 273–282, 283–292, 293–302, 303–312, 313–322, 323–332, 333–342, 343–352, 353–362, 363–372, and 373–382. Positions 153 to 542 are 39 X 10 AA approximate tandem repeats of [LP]-[EKG]-[LHVYQEK]-[PLSQE]-[EQDV]-[QHEKRGA]-Q-[EMVQLP]-[GKLE]-[QHVNLD]; sequence LELPEQQEGH…LEQQKGQLEQ (390 aa). Positions 159–178 are enriched in basic and acidic residues; that stretch reads QEGHLKHLEQQEGQLKHPEQ. Over residues 179-261 the composition is skewed to low complexity; that stretch reads QEGQLELPEQ…QLELSEQQEG (83 aa). Residues 262–271 show a composition bias toward basic and acidic residues; the sequence is QLKHLEHQEG. 3 stretches are compositionally biased toward basic and acidic residues: residues 292–304, 314–328, and 341–360; these read QLKHLDQQEKQPE, KHLEQQEGQPKHLEQ, and GQLKHLEQQEGQLEHLEHQE. The span at 361–383 shows a compositional bias: low complexity; it reads GQLGLPEQQVLQLKQLEKQQGQP. A 24; approximate repeat occupies 383-392; it reads PKHLEEEEGQ. Basic and acidic residues predominate over residues 384–393; that stretch reads KHLEEEEGQL. 11 repeat units span residues 393–402, 403–412, 413–422, 423–432, 433–442, 443–452, 453–462, 463–472, 473–482, 483–492, and 493–502. 2 stretches are compositionally biased toward basic and acidic residues: residues 415 to 424 and 431 to 444; these read QQERQVEHLE and KHLEEQEGQLKHLE. The span at 445-462 shows a compositional bias: low complexity; that stretch reads QQQGQLEVPEQQVGQPKN. The span at 479-488 shows a compositional bias: basic and acidic residues; that stretch reads QVKHLEKQEA. Q496 is covalently cross-linked (Isoglutamyl lysine isopeptide (Gln-Lys) (interchain with K-? in other proteins)). The span at 501–535 shows a compositional bias: basic and acidic residues; that stretch reads KHLEQQEKHLEHPEQQDGQLKHLEQQEGQLKDLEQ. The stretch at 503-512 is one 36; approximate repeat; the sequence is LEQQEKHLEH. 2 consecutive repeat copies span residues 513–522 and 523–532. A 39; approximate repeat occupies 533–542; the sequence is LEQQKGQLEQ.

The protein belongs to the involucrin family. In terms of assembly, directly or indirectly cross-linked to cornifelin (CNFN). In terms of processing, substrate of transglutaminase. Some glutamines and lysines are cross-linked to other involucrin molecules, to other proteins such as keratin, desmoplakin, periplakin and envoplakin, and to lipids like omega-hydroxyceramide. In terms of tissue distribution, keratinocytes of epidermis and other stratified squamous epithelia.

It localises to the cytoplasm. Its function is as follows. Part of the insoluble cornified cell envelope (CE) of stratified squamous epithelia. The chain is Involucrin (IVL) from Homo sapiens (Human).